Reading from the N-terminus, the 392-residue chain is MLPPGADSVVVRHGDVGVKSSHVQSDMERTLRDNVAAMLADRGVPGDVEREWGRVLVRSPAPGRAADAAADTFGVVSASPAVSVAPDLDAISDALAAAARAHYDGGAFAVDARRAGTHDFDSHDVNRVGGDAVWAAVEDDFQPVVDLDDPDITFFVEVRDAEAFVFLTHRDGPGGMPLGTQQPLVALVSGGIDSPVAAWESMRRGAPVIPLYLALGDYGGPDHRARAEAAVRTLDDYAPNHDLSLRVAPAGDAIDRLAAATGRTRMLSFRRFMYRVAEHVAEHAGAAGIVTGEAVGQKSSQTTANLGVVDRATTLPVHRPLLTWDKQRITAAARSIDTFRDSSLDVGCNRLAPRQPLTAAPIESVRADEPDALFEWARAVAADTGPVEVAVA.

The THUMP domain maps to 63 to 169; that stretch reads GRAADAAADT…DAEAFVFLTH (107 aa). ATP contacts are provided by residues 187–188, R270, G292, and Q301; that span reads LV.

It belongs to the ThiI family.

The protein resides in the cytoplasm. The catalysed reaction is [ThiI sulfur-carrier protein]-S-sulfanyl-L-cysteine + a uridine in tRNA + 2 reduced [2Fe-2S]-[ferredoxin] + ATP + H(+) = [ThiI sulfur-carrier protein]-L-cysteine + a 4-thiouridine in tRNA + 2 oxidized [2Fe-2S]-[ferredoxin] + AMP + diphosphate. It catalyses the reaction [ThiS sulfur-carrier protein]-C-terminal Gly-Gly-AMP + S-sulfanyl-L-cysteinyl-[cysteine desulfurase] + AH2 = [ThiS sulfur-carrier protein]-C-terminal-Gly-aminoethanethioate + L-cysteinyl-[cysteine desulfurase] + A + AMP + 2 H(+). It participates in cofactor biosynthesis; thiamine diphosphate biosynthesis. Functionally, catalyzes the ATP-dependent transfer of a sulfur to tRNA to produce 4-thiouridine in position 8 of tRNAs, which functions as a near-UV photosensor. Also catalyzes the transfer of sulfur to the sulfur carrier protein ThiS, forming ThiS-thiocarboxylate. This is a step in the synthesis of thiazole, in the thiamine biosynthesis pathway. The sulfur is donated as persulfide by IscS. This Halobacterium salinarum (strain ATCC 29341 / DSM 671 / R1) protein is Probable tRNA sulfurtransferase.